A 338-amino-acid polypeptide reads, in one-letter code: ATP synthase subunit a (338 aa).

The chain crosses the membrane as a helical span at residues 15 to 35; that stretch reads IAVLVMPLLLGFGAPIYAAAE. The segment at 45–66 is disordered; sequence AAAVHTDEAHGEAGEHAEGGHG. Positions 49–65 are enriched in basic and acidic residues; it reads HTDEAHGEAGEHAEGGH. The next 7 helical transmembrane spans lie at 109 to 129, 174 to 194, 199 to 219, 238 to 258, 262 to 282, 287 to 307, and 308 to 328; these read HVVFMWLAALILLLVFGYVGN, LLTVFVFILVLNLLGLIPYGA, NINVTLTLSVFTFFITQVSAI, ALWIIMIPIEVIGLFTKPFAL, LFANMTAGHIIILSLIFISFI, IVAIFVSVPFSIFIYLLEIFV, and SFLQAFIFTMLSALFIGLGSA.

Belongs to the ATPase A chain family. F-type ATPases have 2 components, CF(1) - the catalytic core - and CF(0) - the membrane proton channel. CF(1) has five subunits: alpha(3), beta(3), gamma(1), delta(1), epsilon(1). CF(0) has four main subunits: a, b, b' and c.

Its subcellular location is the cell inner membrane. In terms of biological role, key component of the proton channel; it plays a direct role in the translocation of protons across the membrane. The sequence is that of ATP synthase subunit a from Chlorobium phaeobacteroides (strain BS1).